Consider the following 189-residue polypeptide: Molybdopterin synthase catalytic subunit (189 aa).

Positions 1–30 (MSSLEISNSCFSPETRSPSSRQSVEDNASE) are enriched in polar residues. The disordered stretch occupies residues 1–41 (MSSLEISNSCFSPETRSPSSRQSVEDNASEPSGKDVDDVQE). Ser20 bears the Phosphoserine mark. Residues 32 to 41 (SGKDVDDVQE) are compositionally biased toward basic and acidic residues. Substrate is bound by residues 143-144 (HR), Lys159, and 166-168 (KKE).

This sequence belongs to the MoaE family. MOCS2B subfamily. In terms of assembly, heterotetramer; composed of 2 small (MOCS2A) and 2 large (MOCS2B) subunits.

Its subcellular location is the cytoplasm. The protein resides in the cytosol. It carries out the reaction 2 [molybdopterin-synthase sulfur-carrier protein]-C-terminal-Gly-aminoethanethioate + cyclic pyranopterin phosphate + H2O = molybdopterin + 2 [molybdopterin-synthase sulfur-carrier protein]-C-terminal Gly-Gly + 2 H(+). It functions in the pathway cofactor biosynthesis; molybdopterin biosynthesis. Its function is as follows. Catalytic subunit of the molybdopterin synthase complex, a complex that catalyzes the conversion of precursor Z into molybdopterin. Acts by mediating the incorporation of 2 sulfur atoms from thiocarboxylated MOCS2A into precursor Z to generate a dithiolene group. This chain is Molybdopterin synthase catalytic subunit, found in Mus musculus (Mouse).